The primary structure comprises 388 residues: Succinate--CoA ligase [ADP-forming] subunit beta (388 aa).

Residues 9-245 (KALLKKYGVS…KSQENERELK (237 aa)) form the ATP-grasp domain. Residues K46, 53 to 55 (GRG), E100, Y103, and E108 contribute to the ATP site. N200 and D214 together coordinate Mg(2+). Residues N265 and 322–324 (GIV) each bind substrate.

Belongs to the succinate/malate CoA ligase beta subunit family. In terms of assembly, heterotetramer of two alpha and two beta subunits. It depends on Mg(2+) as a cofactor.

The enzyme catalyses succinate + ATP + CoA = succinyl-CoA + ADP + phosphate. It carries out the reaction GTP + succinate + CoA = succinyl-CoA + GDP + phosphate. It participates in carbohydrate metabolism; tricarboxylic acid cycle; succinate from succinyl-CoA (ligase route): step 1/1. Its function is as follows. Succinyl-CoA synthetase functions in the citric acid cycle (TCA), coupling the hydrolysis of succinyl-CoA to the synthesis of either ATP or GTP and thus represents the only step of substrate-level phosphorylation in the TCA. The beta subunit provides nucleotide specificity of the enzyme and binds the substrate succinate, while the binding sites for coenzyme A and phosphate are found in the alpha subunit. This chain is Succinate--CoA ligase [ADP-forming] subunit beta, found in Acinetobacter baylyi (strain ATCC 33305 / BD413 / ADP1).